Here is a 105-residue protein sequence, read N- to C-terminus: Small ribosomal subunit protein bS6 (105 aa).

It belongs to the bacterial ribosomal protein bS6 family.

Binds together with bS18 to 16S ribosomal RNA. This chain is Small ribosomal subunit protein bS6, found in Lawsonia intracellularis (strain PHE/MN1-00).